The following is a 246-amino-acid chain: Probable site-specific recombinase in afa region (246 aa).

Residues 40 to 225 (ATPAYLLAPE…FALDMAATLA (186 aa)) enclose the Tyr recombinase domain. Residues Arg75, Lys102, His177, Arg180, and His203 contribute to the active site. The active-site O-(3'-phospho-DNA)-tyrosine intermediate is Tyr212.

It belongs to the 'phage' integrase family.

In Escherichia coli, this protein is Probable site-specific recombinase in afa region (int).